Here is a 100-residue protein sequence, read N- to C-terminus: MSILNHFIFTFFLFCLGLFGIILNRQNIIIILMSIELLLLSINLNFIYFAVLIDDIIGQVFSLLILTVAAAESAIGLAIMIVFFKLYGDISIYKINLLSL.

Helical transmembrane passes span 3–23, 28–48, and 64–84; these read ILNH…GIIL, IIII…NFIY, and LILT…IVFF.

The protein belongs to the complex I subunit 4L family.

The protein localises to the mitochondrion membrane. The enzyme catalyses a ubiquinone + NADH + 5 H(+)(in) = a ubiquinol + NAD(+) + 4 H(+)(out). Functionally, core subunit of the mitochondrial membrane respiratory chain NADH dehydrogenase (Complex I) that is believed to belong to the minimal assembly required for catalysis. Complex I functions in the transfer of electrons from NADH to the respiratory chain. The immediate electron acceptor for the enzyme is believed to be ubiquinone. In Phytophthora infestans (Potato late blight agent), this protein is NADH-ubiquinone oxidoreductase chain 4L (ND4L).